Reading from the N-terminus, the 299-residue chain is Biphenyl-2,3-diol 1,2-dioxygenase (299 aa).

2 consecutive VOC domains span residues 6–121 (ELGY…IFYG) and 146–267 (GIGH…FGWG). The Fe cation site is built by His149, His212, and Glu263.

It belongs to the extradiol ring-cleavage dioxygenase family. In terms of assembly, homooctamer. It depends on Fe(2+) as a cofactor.

The catalysed reaction is biphenyl-2,3-diol + O2 = 2-hydroxy-6-oxo-6-phenylhexa-2,4-dienoate + H(+). Its pathway is xenobiotic degradation; biphenyl degradation; 2-hydroxy-2,4-pentadienoate and benzoate from biphenyl: step 3/4. The polypeptide is Biphenyl-2,3-diol 1,2-dioxygenase (bphC) (Sphingomonas paucimobilis (Pseudomonas paucimobilis)).